Reading from the N-terminus, the 314-residue chain is Olfactory receptor 5G9 (314 aa).

At 1-25 the chain is on the extracellular side; that stretch reads MADENYTRITEFIFIGLRYHPNLQV. Residue Asn-5 is glycosylated (N-linked (GlcNAc...) asparagine). A helical transmembrane segment spans residues 26–46; the sequence is FLFLLFLLFYLVTMTGNLGMI. Residues 47-54 lie on the Cytoplasmic side of the membrane; that stretch reads ILIRVDSR. A helical transmembrane segment spans residues 55–75; it reads LHTPMYFFLSHLSFVDICFSS. At 76–99 the chain is on the extracellular side; it reads VVAPKMLTDFFADKKAISFLGCVL. The cysteines at positions 97 and 189 are disulfide-linked. A helical transmembrane segment spans residues 100-120; sequence QQWFFGFFVAIECLLLASMAY. The Cytoplasmic portion of the chain corresponds to 121–133; that stretch reads DRYVAICNPLLYS. A helical membrane pass occupies residues 134–154; that stretch reads VAMSQRLCIQLVIGPYAVGFF. Topologically, residues 155–196 are extracellular; it reads NTMTHTTAAFRLPFCGSNIINHFFCDMSPILSLICADIRINK. The helical transmembrane segment at 197–217 threads the bilayer; sequence LLVFIVAGAVLIVSSTTIIVS. The Cytoplasmic segment spans residues 218-237; that stretch reads YFHILIAILRIRSAEGRRKA. Residues 238-258 traverse the membrane as a helical segment; it reads FSTCSSHVTAVSILYGTLFFI. At 259 to 271 the chain is on the extracellular side; it reads YVRPSAISSLDLN. Residues 272 to 292 form a helical membrane-spanning segment; the sequence is KVVSVFYTAVIPMLNPLIYSL. Residues 293–314 lie on the Cytoplasmic side of the membrane; it reads RNKEVKSAMGRTVAKAKVFLKN.

Belongs to the G-protein coupled receptor 1 family.

It localises to the cell membrane. Its function is as follows. Potential odorant receptor. The protein is Olfactory receptor 5G9 of Mus musculus (Mouse).